The sequence spans 273 residues: MSTFNSNFKLGTYLTQVRQENPLVHAITNYVTMNDCANITLAAGASPAMCESRDEVSDFVPLAKALYINIGTINQEHKDSIYLAAEKASELEIPIVLDPVGAVAIKSRLDLVKDLLTNYNVSCIKGNNAEIKCLAGRKGHGKGMDSLDLGEDIQMVNSELSEKYNTMVLATGKTDLITKGNITVKVSNGTPLLGRITGSGCMLGILISAFIGASDNDWEAGIAATVSMGVVGEMAEESISSSTDLGSFRVKIFDHMAALTSKELQERGNVSEL.

Met-49 contributes to the substrate binding site. ATP-binding residues include Lys-125 and Thr-171. Gly-198 is a substrate binding site.

This sequence belongs to the Thz kinase family. Mg(2+) is required as a cofactor.

It carries out the reaction 5-(2-hydroxyethyl)-4-methylthiazole + ATP = 4-methyl-5-(2-phosphooxyethyl)-thiazole + ADP + H(+). The protein operates within cofactor biosynthesis; thiamine diphosphate biosynthesis; 4-methyl-5-(2-phosphoethyl)-thiazole from 5-(2-hydroxyethyl)-4-methylthiazole: step 1/1. Catalyzes the phosphorylation of the hydroxyl group of 4-methyl-5-beta-hydroxyethylthiazole (THZ). This Natranaerobius thermophilus (strain ATCC BAA-1301 / DSM 18059 / JW/NM-WN-LF) protein is Hydroxyethylthiazole kinase.